A 674-amino-acid polypeptide reads, in one-letter code: Probable L-type lectin-domain containing receptor kinase I.5 (674 aa).

Positions 1 to 22 are cleaved as a signal peptide; the sequence is MSKGLFLIWLISSFHLISFSTS. At 23 to 286 the chain is on the extracellular side; it reads SKDTSFVFNG…RPRAEHKKVQ (264 aa). The tract at residues 25 to 258 is legume-lectin like; the sequence is DTSFVFNGFG…YHYLLGWSFS (234 aa). 5 N-linked (GlcNAc...) asparagine glycosylation sites follow: Asn-124, Asn-181, Asn-185, Asn-204, and Asn-225. Residues 287–307 form a helical membrane-spanning segment; it reads FALIIALPVILAIVVMAVLAG. The Cytoplasmic portion of the chain corresponds to 308 to 674; it reads VYYHRKKKYA…DHEQPLEFKS (367 aa). The 282-residue stretch at 344-625 folds into the Protein kinase domain; it reads FHKDRFLGRG…LPLPDFSPYT (282 aa). ATP is bound by residues 350-358 and Lys-372; that span reads LGRGGFGEV. The active-site Proton acceptor is Asp-468. Residues 649-662 are compositionally biased toward low complexity; that stretch reads NWSAPSASSSSANN. Positions 649 to 674 are disordered; it reads NWSAPSASSSSANNSKDHEQPLEFKS. The segment covering 663–674 has biased composition (basic and acidic residues); sequence SKDHEQPLEFKS.

The protein in the C-terminal section; belongs to the protein kinase superfamily. Ser/Thr protein kinase family. This sequence in the N-terminal section; belongs to the leguminous lectin family.

Its subcellular location is the cell membrane. It carries out the reaction L-seryl-[protein] + ATP = O-phospho-L-seryl-[protein] + ADP + H(+). The catalysed reaction is L-threonyl-[protein] + ATP = O-phospho-L-threonyl-[protein] + ADP + H(+). The sequence is that of Probable L-type lectin-domain containing receptor kinase I.5 (LECRK15) from Arabidopsis thaliana (Mouse-ear cress).